A 209-amino-acid chain; its full sequence is Protein GrpE (209 aa).

Basic and acidic residues-rich tracts occupy residues 1–16 and 34–44; these read MKKSTKKESTHSKEES and KAGEKTAEPEK. Residues 1–61 are disordered; it reads MKKSTKKEST…EKSPEAACRE (61 aa).

Belongs to the GrpE family. Homodimer.

It localises to the cytoplasm. In terms of biological role, participates actively in the response to hyperosmotic and heat shock by preventing the aggregation of stress-denatured proteins, in association with DnaK and GrpE. It is the nucleotide exchange factor for DnaK and may function as a thermosensor. Unfolded proteins bind initially to DnaJ; upon interaction with the DnaJ-bound protein, DnaK hydrolyzes its bound ATP, resulting in the formation of a stable complex. GrpE releases ADP from DnaK; ATP binding to DnaK triggers the release of the substrate protein, thus completing the reaction cycle. Several rounds of ATP-dependent interactions between DnaJ, DnaK and GrpE are required for fully efficient folding. This chain is Protein GrpE, found in Methanosarcina acetivorans (strain ATCC 35395 / DSM 2834 / JCM 12185 / C2A).